Here is a 585-residue protein sequence, read N- to C-terminus: MGFDYAIVHVKYTIPPAVLLTLLYRPLFTKLDAFKVLFLVTVAVTATIPWDSYLIRTNIWSYPDHVVIGPTLLDIPLEEVFFFFIQTYNTTLLYLILSKPTFQPAYLRAGRPTASSPWKYQKLAGQLFLVGATVWAGLRVHENAKGTYTGLIVVWAAPIILLQWTLAYQFILGLPWTNTVLPIAIPTLYLWLVDTLALRRGTWVISPGTKYGVHLWDGLEIEEALFFFVTNTLIVFGQLAFDNALAVLYTFPALFPKPPSMPTPLDLINALWVSPYKYDRARLAGLQDAVLRLKRKSRSFYLASATFPGPLRSDLLLLYSFCRVADDLVDNAATAEEAKEWISKLHQYLDLVYSDAKSSTVSEDFVQAHFPSDARSALLQLPAHKLPRQPLQDLLHGFEMDLAFNTSSPIKTETDLRLYSERVAGTVAQMCIELIFRLYPSNMTSGEERKVVDAGNQMGMALQYVNIARDISVDAHIGRVYLPLDWLQESGLTYDEVLISPEGARMESLRMRLLEKAFSIYDGARGAIETLPVEARGPIRVAVESYMEIGRTLRQKGYTVRAGRATVSKWRRVIVAWRTLNKSIA.

Residues 1–243 (MGFDYAIVHV…IVFGQLAFDN (243 aa)) form a lycopene beta-cyclase region. 7 helical membrane passes run 3–23 (FDYA…LTLL), 35–55 (KVLF…SYLI), 75–97 (IPLE…YLIL), 123–141 (LAGQ…LRVH), 151–171 (LIVV…YQFI), 173–193 (GLPW…LWLV), and 221–241 (IEEA…QLAF). The interval 250–585 (TFPALFPKPP…AWRTLNKSIA (336 aa)) is phytoene synthase.

This sequence in the N-terminal section; belongs to the lycopene beta-cyclase family. In the C-terminal section; belongs to the phytoene/squalene synthase family.

The protein localises to the membrane. It catalyses the reaction all-trans-lycopene = gamma-carotene. The enzyme catalyses gamma-carotene = all-trans-beta-carotene. The catalysed reaction is 2 (2E,6E,10E)-geranylgeranyl diphosphate = 15-cis-phytoene + 2 diphosphate. Its pathway is carotenoid biosynthesis; beta-carotene biosynthesis. It participates in carotenoid biosynthesis; phytoene biosynthesis; all-trans-phytoene from geranylgeranyl diphosphate: step 1/1. Functionally, bifunctional enzyme that catalyzes the reactions from geranylgeranyl diphosphate to phytoene (phytoene synthase) and lycopene to beta-carotene via the intermediate gamma-carotene (lycopene cyclase). This Phaeosphaeria nodorum (strain SN15 / ATCC MYA-4574 / FGSC 10173) (Glume blotch fungus) protein is Bifunctional lycopene cyclase/phytoene synthase.